Here is a 255-residue protein sequence, read N- to C-terminus: PABIR family member 2 (255 aa).

Residues 1 to 24 are disordered; the sequence is MAQEKMDLDFEADTSEGATLRRSN. At alanine 2 the chain carries N-acetylalanine. Phosphoserine occurs at positions 25, 33, 50, and 58. Threonine 112 carries the phosphothreonine modification. Residues serine 115 and serine 119 each carry the phosphoserine modification. Arginine 122 bears the Omega-N-methylarginine mark. A Phosphoserine modification is found at serine 145. Disordered regions lie at residues 169 to 196 and 219 to 238; these read LGPL…SMLS and SGLS…SPVA. The span at 174 to 184 shows a compositional bias: basic and acidic residues; that stretch reads RKGEMEMESQP.

This sequence belongs to the FAM122 family.

This is PABIR family member 2 from Mus musculus (Mouse).